Here is a 348-residue protein sequence, read N- to C-terminus: L-threonine 3-dehydrogenase (348 aa).

Cys42 contributes to the Zn(2+) binding site. Residues Thr44 and His47 each act as charge relay system in the active site. His67, Glu68, Cys97, Cys100, Cys103, and Cys111 together coordinate Zn(2+). Residues Leu179, Glu199, Arg204, 266–268, and 291–292 contribute to the NAD(+) site; these read LGL and IT.

Belongs to the zinc-containing alcohol dehydrogenase family. In terms of assembly, homotetramer. The cofactor is Zn(2+).

Its subcellular location is the cytoplasm. It catalyses the reaction L-threonine + NAD(+) = (2S)-2-amino-3-oxobutanoate + NADH + H(+). Its pathway is amino-acid degradation; L-threonine degradation via oxydo-reductase pathway; glycine from L-threonine: step 1/2. Catalyzes the NAD(+)-dependent oxidation of L-threonine to 2-amino-3-ketobutyrate. To a lesser extent, also catalyzes the oxidation of L-serine, D-threonine, butan-2,3-diol, butan-1,2-diol, and propan-1,2-diol and cannot oxidize other L-amino acids. Cannot utilize NADP(H) instead of NAD(H). This chain is L-threonine 3-dehydrogenase, found in Pyrococcus furiosus (strain ATCC 43587 / DSM 3638 / JCM 8422 / Vc1).